Consider the following 360-residue polypeptide: 3-dehydroquinate synthase (360 aa).

NAD(+)-binding positions include 70–75 (DGESLK), 128–129 (TT), K141, and K150. Zn(2+)-binding residues include E182, H243, and H259.

This sequence belongs to the sugar phosphate cyclases superfamily. Dehydroquinate synthase family. NAD(+) serves as cofactor. Requires Co(2+) as cofactor. The cofactor is Zn(2+).

The protein resides in the cytoplasm. The catalysed reaction is 7-phospho-2-dehydro-3-deoxy-D-arabino-heptonate = 3-dehydroquinate + phosphate. It functions in the pathway metabolic intermediate biosynthesis; chorismate biosynthesis; chorismate from D-erythrose 4-phosphate and phosphoenolpyruvate: step 2/7. Its function is as follows. Catalyzes the conversion of 3-deoxy-D-arabino-heptulosonate 7-phosphate (DAHP) to dehydroquinate (DHQ). The polypeptide is 3-dehydroquinate synthase (Thermoplasma volcanium (strain ATCC 51530 / DSM 4299 / JCM 9571 / NBRC 15438 / GSS1)).